Reading from the N-terminus, the 103-residue chain is Large ribosomal subunit protein bL21 (103 aa).

Belongs to the bacterial ribosomal protein bL21 family. As to quaternary structure, part of the 50S ribosomal subunit. Contacts protein L20.

Functionally, this protein binds to 23S rRNA in the presence of protein L20. The chain is Large ribosomal subunit protein bL21 from Mycobacterium sp. (strain JLS).